The primary structure comprises 406 residues: 12S rRNA N(4)-cytidine methyltransferase METTL15 (406 aa).

Residues 1–22 (MLRYPYFYRTYNRLFSHFVDSG) constitute a mitochondrion transit peptide. S-adenosyl-L-methionine contacts are provided by residues 100 to 102 (GGH), Asp119, Phe146, Asp169, and Gln176. Ser358 carries the phosphoserine modification.

It belongs to the methyltransferase superfamily. RsmH family.

It localises to the mitochondrion matrix. It catalyses the reaction cytidine(839) in 12S rRNA + S-adenosyl-L-methionine = N(4)-methylcytidine(839) in 12S rRNA + S-adenosyl-L-homocysteine + H(+). Functionally, N4-methylcytidine (m4C) methyltransferase responsible for the methylation of position C839 in mitochondrial 12S rRNA. Involved in the stabilization of 12S rRNA folding, therefore facilitating the assembly of the mitochondrial small ribosomal subunits. The sequence is that of 12S rRNA N(4)-cytidine methyltransferase METTL15 from Mus musculus (Mouse).